A 277-amino-acid polypeptide reads, in one-letter code: N-acetylmuramic acid 6-phosphate etherase (277 aa).

The 164-residue stretch at 53-216 folds into the SIS domain; the sequence is IIPRVKKGGR…STTIMIELGR (164 aa). The Proton donor role is filled by E81. E112 is a catalytic residue.

Belongs to the GCKR-like family. MurNAc-6-P etherase subfamily. Homodimer.

It catalyses the reaction N-acetyl-D-muramate 6-phosphate + H2O = N-acetyl-D-glucosamine 6-phosphate + (R)-lactate. The protein operates within amino-sugar metabolism; N-acetylmuramate degradation. Its function is as follows. Specifically catalyzes the cleavage of the D-lactyl ether substituent of MurNAc 6-phosphate, producing GlcNAc 6-phosphate and D-lactate. The polypeptide is N-acetylmuramic acid 6-phosphate etherase (Bacteroides thetaiotaomicron (strain ATCC 29148 / DSM 2079 / JCM 5827 / CCUG 10774 / NCTC 10582 / VPI-5482 / E50)).